The following is a 190-amino-acid chain: Small ribosomal subunit protein uS7 (190 aa).

Threonine 2 carries the post-translational modification N-acetylthreonine.

It belongs to the universal ribosomal protein uS7 family. As to quaternary structure, component of the small ribosomal subunit. Part of the small subunit (SSU) processome, composed of more than 70 proteins and the RNA chaperone small nucleolar RNA (snoRNA) U3.

It is found in the cytoplasm. It localises to the nucleus. Its subcellular location is the nucleolus. Its function is as follows. Component of the small ribosomal subunit. The ribosome is a large ribonucleoprotein complex responsible for the synthesis of proteins in the cell. Part of the small subunit (SSU) processome, first precursor of the small eukaryotic ribosomal subunit. During the assembly of the SSU processome in the nucleolus, many ribosome biogenesis factors, an RNA chaperone and ribosomal proteins associate with the nascent pre-rRNA and work in concert to generate RNA folding, modifications, rearrangements and cleavage as well as targeted degradation of pre-ribosomal RNA by the RNA exosome. In Dictyostelium discoideum (Social amoeba), this protein is Small ribosomal subunit protein uS7 (rps5).